Reading from the N-terminus, the 41-residue chain is Photosystem II reaction center protein J (41 aa).

A helical transmembrane segment spans residues Ile-9–Phe-29.

It belongs to the PsbJ family. PSII is composed of 1 copy each of membrane proteins PsbA, PsbB, PsbC, PsbD, PsbE, PsbF, PsbH, PsbI, PsbJ, PsbK, PsbL, PsbM, PsbT, PsbX, PsbY, PsbZ, Psb30/Ycf12, at least 3 peripheral proteins of the oxygen-evolving complex and a large number of cofactors. It forms dimeric complexes.

The protein resides in the plastid. The protein localises to the chloroplast thylakoid membrane. In terms of biological role, one of the components of the core complex of photosystem II (PSII). PSII is a light-driven water:plastoquinone oxidoreductase that uses light energy to abstract electrons from H(2)O, generating O(2) and a proton gradient subsequently used for ATP formation. It consists of a core antenna complex that captures photons, and an electron transfer chain that converts photonic excitation into a charge separation. In Ostreococcus tauri, this protein is Photosystem II reaction center protein J.